Reading from the N-terminus, the 350-residue chain is Phosphotriesterase-related protein (350 aa).

The a divalent metal cation site is built by His22, His24, Glu169, His201, His230, and Asp298.

This sequence belongs to the metallo-dependent hydrolases superfamily. Phosphotriesterase family. It depends on a divalent metal cation as a cofactor.

The polypeptide is Phosphotriesterase-related protein (Drosophila persimilis (Fruit fly)).